The primary structure comprises 99 residues: Co-chaperonin GroES (99 aa).

The protein belongs to the GroES chaperonin family. As to quaternary structure, heptamer of 7 subunits arranged in a ring. Interacts with the chaperonin GroEL.

The protein resides in the cytoplasm. Its function is as follows. Together with the chaperonin GroEL, plays an essential role in assisting protein folding. The GroEL-GroES system forms a nano-cage that allows encapsulation of the non-native substrate proteins and provides a physical environment optimized to promote and accelerate protein folding. GroES binds to the apical surface of the GroEL ring, thereby capping the opening of the GroEL channel. This is Co-chaperonin GroES from Corynebacterium jeikeium (strain K411).